A 616-amino-acid polypeptide reads, in one-letter code: Proline--tRNA ligase (616 aa).

The protein belongs to the class-II aminoacyl-tRNA synthetase family. ProS type 1 subfamily. Homodimer.

The protein localises to the cytoplasm. The catalysed reaction is tRNA(Pro) + L-proline + ATP = L-prolyl-tRNA(Pro) + AMP + diphosphate. In terms of biological role, catalyzes the attachment of proline to tRNA(Pro) in a two-step reaction: proline is first activated by ATP to form Pro-AMP and then transferred to the acceptor end of tRNA(Pro). As ProRS can inadvertently accommodate and process non-cognate amino acids such as alanine and cysteine, to avoid such errors it has two additional distinct editing activities against alanine. One activity is designated as 'pretransfer' editing and involves the tRNA(Pro)-independent hydrolysis of activated Ala-AMP. The other activity is designated 'posttransfer' editing and involves deacylation of mischarged Ala-tRNA(Pro). The misacylated Cys-tRNA(Pro) is not edited by ProRS. This is Proline--tRNA ligase from Lactococcus lactis subsp. lactis (strain IL1403) (Streptococcus lactis).